Here is a 417-residue protein sequence, read N- to C-terminus: Aromatic-amino-acid aminotransferase 1 (417 aa).

Lys258 is modified (N6-(pyridoxal phosphate)lysine).

This sequence belongs to the class-I pyridoxal-phosphate-dependent aminotransferase family. In terms of assembly, homodimer. Requires pyridoxal 5'-phosphate as cofactor.

The enzyme catalyses an aromatic L-alpha-amino acid + 2-oxoglutarate = an aromatic oxo-acid + L-glutamate. Catalyzes the transamination of phenylalanine, tyrosine and tryptophan. Shows virtually no activity towards aspartic acid, alanine, valine or isoleucine. The chain is Aromatic-amino-acid aminotransferase 1 from Thermococcus litoralis (strain ATCC 51850 / DSM 5473 / JCM 8560 / NS-C).